Here is a 148-residue protein sequence, read N- to C-terminus: Small ribosomal subunit protein uS7m (148 aa).

The protein belongs to the universal ribosomal protein uS7 family. As to quaternary structure, part of the small ribosomal subunit.

The protein localises to the mitochondrion. Its function is as follows. One of the primary rRNA binding proteins, it binds directly to 18S rRNA where it nucleates assembly of the head domain of the small subunit. This chain is Small ribosomal subunit protein uS7m (RPS7), found in Triticum aestivum (Wheat).